Consider the following 354-residue polypeptide: Protein Wnt-8a (354 aa).

Positions 1–19 are cleaved as a signal peptide; that stretch reads MGHLLMLWVAAGMCYPALG. Cys54 and Cys65 are disulfide-bonded. The N-linked (GlcNAc...) asparagine glycan is linked to Asn103. 10 disulfides stabilise this stretch: Cys104/Cys112, Cys114/Cys132, Cys180/Cys194, Cys182/Cys189, Cys259/Cys297, Cys275/Cys290, Cys294/Cys336, Cys312/Cys327, Cys314/Cys324, and Cys319/Cys320. Ser186 carries O-palmitoleoyl serine lipidation. A glycan (N-linked (GlcNAc...) asparagine) is linked at Asn262.

The protein belongs to the Wnt family. Forms a soluble 1:1 complex with AFM; this prevents oligomerization and is required for prolonged biological activity. The complex with AFM may represent the physiological form in body fluids. In terms of processing, palmitoleoylation is required for efficient binding to frizzled receptors. Depalmitoleoylation leads to Wnt signaling pathway inhibition. Proteolytic processing by TIKI1 and TIKI2 promotes oxidation and formation of large disulfide-bond oligomers, leading to inactivation of WNT8A.

It is found in the secreted. The protein localises to the extracellular space. Its subcellular location is the extracellular matrix. Ligand for members of the frizzled family of seven transmembrane receptors. Plays a role in embryonic patterning. The chain is Protein Wnt-8a (Wnt8a) from Mus musculus (Mouse).